Reading from the N-terminus, the 810-residue chain is MPGGMAPLKKPRNPTKLPLALNPTKSKDVLAVLAERNQAIIPVGAWVEPASPNWSGIPAHTSAYVVEEEIKEQQRRKQESLRHFQRQVRHRVNQRVKLRKKQQLHKSYKAAEKEGSIAMQYSDLAHLSSKRTSVFPSNLNAAVGRFRLPTSQVLGDAIEDGENQLFQQQAQALSQTMKQARHQLASFKTVSEKKTPVLPNGGRKGCPTQEGLGCGKISFVAVSEERDALFVSCQQDFLSEDKEKAFSKVQKVKFKNPLSVVIKEDERKQLHPHSLQAVLPEAQDYFVEVQSGLPESQSDVIDVQNVEPKASRIEPKTLGVEPDTQATGVECQTTEPEGQAVKTGIQDVPKVQTVELDGNTELEAQDFLPSHQAFLSRDTDCLPNCQYQDSLPKGHCVLPNYWNVLPKYQNQHFLPVDQEFLPRNQLALPKEQNHPLQCQKQDLLPREQFPLLLRHQDQREPHVLPKCQEHDVLSKAQNYLHNYQEQDLQLQNQEVNSKEPLSDITDGKGREIFSLDMFSKKPSTFMRRERGDEELPLDSPQCAPPQIQDQVFLREQSQQPSVRTAERWQEDLYLSGHECLPPRQRRDTCSRQQQVYEEYRSGLSTEQQALLAFQSGVDQEEDKKERQKQYLRHRRLFMDIEREQVKEQNRQRERKRRIEKIKKKKEQQRYAEEQRLLRMNCHEEPYSEEKISDVLAQLQLEEIKGAREKQQQREKEYIRYVEALRAQVQEKMKLYNITLPPLCCCGPDFWDAHPDTCANNCIFYKNYRAYNRALHSVINSSDISEGNATLRNAIRNFASAHRRTPKQSLH.

Coiled-coil stretches lie at residues 65 to 89 (VVEEEIKEQQRRKQESLRHFQRQVR), 160 to 189 (DGENQLFQQQAQALSQTMKQARHQLASFKT), and 638 to 669 (MDIEREQVKEQNRQRERKRRIEKIKKKKEQQR).

As to quaternary structure, interacts with POC5, POC1B, CETN2 and FAM161A.

Its subcellular location is the cytoplasm. The protein resides in the cytoskeleton. The protein localises to the microtubule organizing center. It is found in the centrosome. It localises to the centriole. Its subcellular location is the centriolar satellite. Its function is as follows. Plays an important role in primary cilium assembly, maintenance, and length regulation. Interacts with centriole inner scaffold proteins to promote proper centriole size and integrity and assembly of functional cilia. Required for the recruitment of both the inner scaffold protein POC1B and the distal SFI1/CETN2 complex to centrioles. The chain is Coiled-coil domain-containing protein 15 (Ccdc15) from Mus musculus (Mouse).